We begin with the raw amino-acid sequence, 158 residues long: MAVKIRLLRMGKIRNPQYRIVIADSRTKRDGRAIEFVGIYQPKEDPSVIEVKSDRVQYWLSVGAQPSEAVQRLLEKTGDWQKFKGLPAPEPLKVAPERVDRKAAYEAEAKAAAGLAEAPTKPAKKAPKAEAAPKTEAAPKADAPKTEEQAGAGSGEQG.

Positions 111-121 (AAAGLAEAPTK) are enriched in low complexity. Positions 111-158 (AAAGLAEAPTKPAKKAPKAEAAPKTEAAPKADAPKTEEQAGAGSGEQG) are disordered. Residues 127-148 (PKAEAAPKTEAAPKADAPKTEE) are compositionally biased toward basic and acidic residues.

This sequence belongs to the bacterial ribosomal protein bS16 family.

The chain is Small ribosomal subunit protein bS16 from Salinispora arenicola (strain CNS-205).